A 66-amino-acid chain; its full sequence is DNA-directed RNA polymerase subunit Rpo10 (66 aa).

Positions 7, 10, 44, and 45 each coordinate Zn(2+).

Belongs to the archaeal Rpo10/eukaryotic RPB10 RNA polymerase subunit family. In terms of assembly, part of the 13-subunit RNA polymerase complex. The cofactor is Zn(2+).

It localises to the cytoplasm. It carries out the reaction RNA(n) + a ribonucleoside 5'-triphosphate = RNA(n+1) + diphosphate. DNA-dependent RNA polymerase (RNAP) catalyzes the transcription of DNA into RNA using the four ribonucleoside triphosphates as substrates. The protein is DNA-directed RNA polymerase subunit Rpo10 of Sulfolobus acidocaldarius (strain ATCC 33909 / DSM 639 / JCM 8929 / NBRC 15157 / NCIMB 11770).